Consider the following 203-residue polypeptide: Serine hydrolase-like protein (203 aa).

The AB hydrolase-1 domain occupies 33-145 (PPVLCLHGWL…FLLESDEMEN (113 aa)). The active site involves S108.

Belongs to the AB hydrolase superfamily.

Functionally, putative serine hydrolase. The sequence is that of Serine hydrolase-like protein (SERHL) from Homo sapiens (Human).